Here is a 393-residue protein sequence, read N- to C-terminus: Pyrin and HIN domain-containing protein 1-like (393 aa).

The 87-residue stretch at 1-87 (MVNEYKRIVL…ANKLKNEKAK (87 aa)) folds into the Pyrin domain. Residues 82-188 (KNEKAKAKRK…TPTRSSSRIL (107 aa)) form a disordered region. The segment covering 87–102 (KAKRKGKGKRKTAAKR) has biased composition (basic residues). 2 stretches are compositionally biased toward polar residues: residues 108–118 (PSTSQPMSTTN) and 126–151 (GRST…AIQI). Positions 152–169 (SPTIASSSGQTSSRSSET) are enriched in low complexity. Positions 170–186 (LQSIIQSPETPTRSSSR) are enriched in polar residues. The region spanning 219 to 393 (NVPKEPSEEN…NPGDKLRLML (175 aa)) is the HIN-200 domain.

This sequence belongs to the HIN-200 family.

It localises to the nucleus. The chain is Pyrin and HIN domain-containing protein 1-like from Mus musculus (Mouse).